A 68-amino-acid polypeptide reads, in one-letter code: Conotoxin Cal12.1p3 (68 aa).

Positions 1 to 21 (DLITNSYTRGKPRHVTSWPKL) are excised as a propeptide.

In terms of processing, contains 4 disulfide bonds. As to expression, expressed by the venom duct.

It localises to the secreted. The chain is Conotoxin Cal12.1p3 from Californiconus californicus (California cone).